The following is a 440-amino-acid chain: Peroxisome proliferator-activated receptor delta (440 aa).

A disordered region spans residues 1–53 (MEQPQEETPEAREEEKEEVAMGDGAPELNGGPEHTLPSSSCADLSQNSSPSSL). Positions 36-53 (LPSSSCADLSQNSSPSSL) are enriched in polar residues. The nuclear receptor DNA-binding region spans 70–144 (NMECRVCGDK…LGMSHNAIRF (75 aa)). NR C4-type zinc fingers lie at residues 73 to 93 (CRVC…CEGC) and 110 to 132 (CDRI…FQKC). Positions 210 to 438 (FVIHDIETLW…HPLLQEIYKD (229 aa)) constitute an NR LBD domain.

The protein belongs to the nuclear hormone receptor family. NR1 subfamily. Heterodimer with the retinoid X receptor. Interacts (via domain NR LBD) with CRY1 and CRY2 in a ligand-dependent manner. In terms of processing, 'Lys-48'-linked polyubiquitinated; leading to proteasomal degradation. Deubiquitinated and stabilized by OTUD3. As to expression, heart, adrenal and intestine.

It is found in the nucleus. Functionally, ligand-activated transcription factor key mediator of energy metabolism in adipose tissues. Receptor that binds peroxisome proliferators such as hypolipidemic drugs and fatty acids. Has a preference for poly-unsaturated fatty acids, such as gamma-linoleic acid and eicosapentanoic acid. Once activated by a ligand, the receptor binds to promoter elements of target genes. Regulates the peroxisomal beta-oxidation pathway of fatty acids. Functions as transcription activator for the acyl-CoA oxidase gene. Decreases expression of NPC1L1 once activated by a ligand. The sequence is that of Peroxisome proliferator-activated receptor delta (Ppard) from Mus musculus (Mouse).